The chain runs to 279 residues: Ribosomal RNA small subunit methyltransferase A (279 aa).

S-adenosyl-L-methionine contacts are provided by leucine 42, glycine 67, glutamate 88, aspartate 113, and asparagine 129.

It belongs to the class I-like SAM-binding methyltransferase superfamily. rRNA adenine N(6)-methyltransferase family. RsmA subfamily.

It is found in the cytoplasm. The enzyme catalyses adenosine(1518)/adenosine(1519) in 16S rRNA + 4 S-adenosyl-L-methionine = N(6)-dimethyladenosine(1518)/N(6)-dimethyladenosine(1519) in 16S rRNA + 4 S-adenosyl-L-homocysteine + 4 H(+). Specifically dimethylates two adjacent adenosines (A1518 and A1519) in the loop of a conserved hairpin near the 3'-end of 16S rRNA in the 30S particle. May play a critical role in biogenesis of 30S subunits. The chain is Ribosomal RNA small subunit methyltransferase A from Thermotoga maritima (strain ATCC 43589 / DSM 3109 / JCM 10099 / NBRC 100826 / MSB8).